We begin with the raw amino-acid sequence, 249 residues long: Ubiquinone biosynthesis O-methyltransferase (249 aa).

Residues Arg41, Gly72, Asp93, and Met136 each coordinate S-adenosyl-L-methionine.

It belongs to the methyltransferase superfamily. UbiG/COQ3 family.

The enzyme catalyses a 3-demethylubiquinol + S-adenosyl-L-methionine = a ubiquinol + S-adenosyl-L-homocysteine + H(+). The catalysed reaction is a 3-(all-trans-polyprenyl)benzene-1,2-diol + S-adenosyl-L-methionine = a 2-methoxy-6-(all-trans-polyprenyl)phenol + S-adenosyl-L-homocysteine + H(+). The protein operates within cofactor biosynthesis; ubiquinone biosynthesis. Its function is as follows. O-methyltransferase that catalyzes the 2 O-methylation steps in the ubiquinone biosynthetic pathway. This is Ubiquinone biosynthesis O-methyltransferase from Mesorhizobium japonicum (strain LMG 29417 / CECT 9101 / MAFF 303099) (Mesorhizobium loti (strain MAFF 303099)).